Consider the following 381-residue polypeptide: tRNA-specific 2-thiouridylase MnmA (381 aa).

Residues 26–33 (AMSGGVDS) and Leu-52 each bind ATP. Residue Cys-120 is the Nucleophile of the active site. Cys-120 and Cys-217 form a disulfide bridge. Gly-144 contributes to the ATP binding site. The interaction with tRNA stretch occupies residues 166 to 168 (RDQ). The active-site Cysteine persulfide intermediate is Cys-217.

Belongs to the MnmA/TRMU family.

It is found in the cytoplasm. The catalysed reaction is S-sulfanyl-L-cysteinyl-[protein] + uridine(34) in tRNA + AH2 + ATP = 2-thiouridine(34) in tRNA + L-cysteinyl-[protein] + A + AMP + diphosphate + H(+). Functionally, catalyzes the 2-thiolation of uridine at the wobble position (U34) of tRNA, leading to the formation of s(2)U34. The chain is tRNA-specific 2-thiouridylase MnmA from Ruegeria sp. (strain TM1040) (Silicibacter sp.).